A 143-amino-acid polypeptide reads, in one-letter code: Large ribosomal subunit protein uL11 (143 aa).

It belongs to the universal ribosomal protein uL11 family. Part of the ribosomal stalk of the 50S ribosomal subunit. Interacts with L10 and the large rRNA to form the base of the stalk. L10 forms an elongated spine to which L12 dimers bind in a sequential fashion forming a multimeric L10(L12)X complex. In terms of processing, one or more lysine residues are methylated.

Its function is as follows. Forms part of the ribosomal stalk which helps the ribosome interact with GTP-bound translation factors. The sequence is that of Large ribosomal subunit protein uL11 from Bordetella parapertussis (strain 12822 / ATCC BAA-587 / NCTC 13253).